The sequence spans 287 residues: ATP synthase gamma chain (287 aa).

The protein belongs to the ATPase gamma chain family. F-type ATPases have 2 components, CF(1) - the catalytic core - and CF(0) - the membrane proton channel. CF(1) has five subunits: alpha(3), beta(3), gamma(1), delta(1), epsilon(1). CF(0) has three main subunits: a, b and c.

The protein resides in the cell inner membrane. Its function is as follows. Produces ATP from ADP in the presence of a proton gradient across the membrane. The gamma chain is believed to be important in regulating ATPase activity and the flow of protons through the CF(0) complex. The polypeptide is ATP synthase gamma chain (Xylella fastidiosa (strain M12)).